A 143-amino-acid chain; its full sequence is Large ribosomal subunit protein uL15 (143 aa).

Positions 1-54 are disordered; sequence MQLNSIKPAPGAKHPKRRVGRGIGSGLGKTAGRGHKGQKSRAGGFHKVGFEGGQ. Positions 21-31 are enriched in gly residues; that stretch reads RGIGSGLGKTA.

The protein belongs to the universal ribosomal protein uL15 family. In terms of assembly, part of the 50S ribosomal subunit.

Its function is as follows. Binds to the 23S rRNA. The chain is Large ribosomal subunit protein uL15 from Nitrosospira multiformis (strain ATCC 25196 / NCIMB 11849 / C 71).